The following is a 329-amino-acid chain: Phospho-N-acetylmuramoyl-pentapeptide-transferase (329 aa).

9 helical membrane passes run 1–21 (MLLNGIVAAVITMIITIIGIP), 53–73 (MGGFVFVVVSLVVSLVAALVF), 76–96 (FSPAFITAWWVFAMYAVIGFL), 109–129 (GLTAKQKMLAQILIGIVSYFI), 141–161 (ILSWQVNIGIFFSIFIIIWLV), 175–195 (GLASITVAISLTAYAVIAVVH), 198–218 (YDVLLIILSVIGGLLGFFVFN), 237–257 (FLAIVSILLHAEWTLLLIGAV), and 309–329 (IVFWLFTAVLSVIALCIYFAF).

It belongs to the glycosyltransferase 4 family. MraY subfamily. Requires Mg(2+) as cofactor.

The protein localises to the cell membrane. It carries out the reaction UDP-N-acetyl-alpha-D-muramoyl-L-alanyl-gamma-D-glutamyl-L-lysyl-D-alanyl-D-alanine + di-trans,octa-cis-undecaprenyl phosphate = Mur2Ac(oyl-L-Ala-gamma-D-Glu-L-Lys-D-Ala-D-Ala)-di-trans,octa-cis-undecaprenyl diphosphate + UMP. Its pathway is cell wall biogenesis; peptidoglycan biosynthesis. Its function is as follows. Catalyzes the initial step of the lipid cycle reactions in the biosynthesis of the cell wall peptidoglycan: transfers peptidoglycan precursor phospho-MurNAc-pentapeptide from UDP-MurNAc-pentapeptide onto the lipid carrier undecaprenyl phosphate, yielding undecaprenyl-pyrophosphoryl-MurNAc-pentapeptide, known as lipid I. The sequence is that of Phospho-N-acetylmuramoyl-pentapeptide-transferase from Lactococcus lactis subsp. cremoris (strain SK11).